The sequence spans 398 residues: E3 ubiquitin-protein ligase MARCHF11 (398 aa).

Positions 1–14 (MSDEGSKRGSRADS) are enriched in basic and acidic residues. Residues 1–158 (MSDEGSKRGS…GSGDQRSGHQ (158 aa)) form a disordered region. The span at 19-31 (PPLPPPPPPPPPG) shows a compositional bias: pro residues. 2 stretches are compositionally biased toward basic and acidic residues: residues 94–104 (EGPRRLPEVKL) and 121–130 (ACREGERRGT). The RING-CH-type zinc-finger motif lies at 158–218 (QHQHHQPICK…ELCCYRYHVT (61 aa)). The Zn(2+) site is built by C166, C169, C182, C184, H192, C195, C208, and C211. Helical transmembrane passes span 241–261 (MIAV…LLWS) and 274–294 (ILFQ…IGLI). The YXXL motif motif lies at 367-370 (YVLL). Residues 395-398 (VTSV) carry the PDZ-binding motif.

In terms of assembly, interacts (YXXL motif) with AP1M1. Interacts (via PDZ-binding motif) with LIN7A. Interacts with unidentified fucose glycoproteins. In terms of tissue distribution, predominantly expressed in testis. Present in early developing spermatids. Not present in spermatogonia, spermatocytes or somatic cells (i.e. peritubular, Leydig, and Sertoli cells). Present in early round spermatids at step 4, remains until step 11, then it decreases at steps 12-15, and diminishes after step 16 (at protein level). Also expressed at lower level in brain.

It localises to the cytoplasmic vesicle membrane. The catalysed reaction is S-ubiquitinyl-[E2 ubiquitin-conjugating enzyme]-L-cysteine + [acceptor protein]-L-lysine = [E2 ubiquitin-conjugating enzyme]-L-cysteine + N(6)-ubiquitinyl-[acceptor protein]-L-lysine.. It functions in the pathway protein modification; protein ubiquitination. E3 ubiquitin-protein ligase that mediates polyubiquitination of CD4. E3 ubiquitin ligases accept ubiquitin from an E2 ubiquitin-conjugating enzyme in the form of a thioester and then directly transfer the ubiquitin to targeted substrates. May play a role in ubuquitin-dependent protein sorting in developmenting spermatids. The protein is E3 ubiquitin-protein ligase MARCHF11 (Marchf11) of Rattus norvegicus (Rat).